The primary structure comprises 452 residues: COP9 signalosome complex subunit 11 (452 aa).

One can recognise a PCI domain in the interval F205–D374.

As to quaternary structure, component of a COP9 signalosome-like (CSN) complex.

It is found in the cytoplasm. The protein localises to the nucleus. Component of the COP9 signalosome (CSN) complex that acts as an regulator of the ubiquitin (Ubl) conjugation pathway by mediating the deneddylation of the cullin subunit of SCF-type E3 ubiquitin-protein ligase complexes The CSN complex is involved in the regulation of the mating pheromone response. PCI8 may also be involved in transcriptional and translational control. The sequence is that of COP9 signalosome complex subunit 11 (PCI8) from Candida glabrata (strain ATCC 2001 / BCRC 20586 / JCM 3761 / NBRC 0622 / NRRL Y-65 / CBS 138) (Yeast).